A 305-amino-acid polypeptide reads, in one-letter code: UDP-N-acetylenolpyruvoylglucosamine reductase (305 aa).

The 166-residue stretch at R34–K199 folds into the FAD-binding PCMH-type domain. The active site involves R179. S228 serves as the catalytic Proton donor. Residue E298 is part of the active site.

The protein belongs to the MurB family. FAD serves as cofactor.

The protein localises to the cytoplasm. The catalysed reaction is UDP-N-acetyl-alpha-D-muramate + NADP(+) = UDP-N-acetyl-3-O-(1-carboxyvinyl)-alpha-D-glucosamine + NADPH + H(+). Its pathway is cell wall biogenesis; peptidoglycan biosynthesis. Functionally, cell wall formation. The protein is UDP-N-acetylenolpyruvoylglucosamine reductase of Bradyrhizobium diazoefficiens (strain JCM 10833 / BCRC 13528 / IAM 13628 / NBRC 14792 / USDA 110).